We begin with the raw amino-acid sequence, 131 residues long: Global transcriptional regulator Spx (131 aa).

A disulfide bridge connects residues Cys10 and Cys13.

It belongs to the ArsC family. Spx subfamily. In terms of assembly, interacts with the C-terminal domain of the alpha subunit of the RNAP.

The protein resides in the cytoplasm. Global transcriptional regulator that plays a key role in stress response and exerts either positive or negative regulation of genes. Acts by interacting with the C-terminal domain of the alpha subunit of the RNA polymerase (RNAP). This interaction can enhance binding of RNAP to the promoter region of target genes and stimulate their transcription, or block interaction of RNAP with activator. This chain is Global transcriptional regulator Spx, found in Shouchella clausii (strain KSM-K16) (Alkalihalobacillus clausii).